Consider the following 431-residue polypeptide: Enolase (431 aa).

Q163 is a (2R)-2-phosphoglycerate binding site. The Proton donor role is filled by E205. Mg(2+) is bound by residues D242, E288, and D315. K340, R369, S370, and K391 together coordinate (2R)-2-phosphoglycerate. The Proton acceptor role is filled by K340.

This sequence belongs to the enolase family. Requires Mg(2+) as cofactor.

It is found in the cytoplasm. Its subcellular location is the secreted. The protein resides in the cell surface. The catalysed reaction is (2R)-2-phosphoglycerate = phosphoenolpyruvate + H2O. Its pathway is carbohydrate degradation; glycolysis; pyruvate from D-glyceraldehyde 3-phosphate: step 4/5. Catalyzes the reversible conversion of 2-phosphoglycerate (2-PG) into phosphoenolpyruvate (PEP). It is essential for the degradation of carbohydrates via glycolysis. This chain is Enolase, found in Acholeplasma laidlawii (strain PG-8A).